Reading from the N-terminus, the 889-residue chain is Coatomer subunit beta' (889 aa).

WD repeat units lie at residues 11–41 (NRSD…ELWN), 53–83 (VTET…RVFN), 95–125 (AHPD…KLWN), 138–169 (GHEH…KVWS), 182–214 (GQER…KIWD), and 226–256 (GHMS…KIWN). S326 carries the phosphoserine modification. Positions 806 to 889 (CGAEGLPGSS…AVPEPVEEES (84 aa)) are disordered. Residues 836–864 (DENKEAEVEDSEFKESNSEAVEAEKKEEE) are compositionally biased toward basic and acidic residues. Positions 866–879 (PQQQQSEQQPEQGE) are enriched in low complexity.

The protein belongs to the WD repeat COPB2 family. In terms of assembly, oligomeric complex that consists of at least the alpha, beta, beta', gamma, delta, epsilon and zeta subunits. Interacts with the ESCRT-0 subunit VPS27.

Its subcellular location is the cytoplasm. The protein localises to the golgi apparatus membrane. The protein resides in the cytoplasmic vesicle. It is found in the COPI-coated vesicle membrane. The coatomer is a cytosolic protein complex that binds to dilysine motifs and reversibly associates with Golgi non-clathrin-coated vesicles, which further mediate biosynthetic protein transport from the ER, via the Golgi up to the trans Golgi network. Coatomer complex is required for budding from Golgi membranes, and is essential for the retrograde Golgi-to-ER transport of dilysine-tagged proteins. The sequence is that of Coatomer subunit beta' (SEC27) from Saccharomyces cerevisiae (strain ATCC 204508 / S288c) (Baker's yeast).